Here is a 207-residue protein sequence, read N- to C-terminus: Guanylate kinase (207 aa).

Residues 3–181 enclose the Guanylate kinase-like domain; sequence GLLFVVSAAS…ALHDLESVIT (179 aa). Residue 10–17 coordinates ATP; that stretch reads AASGTGKT.

This sequence belongs to the guanylate kinase family.

It is found in the cytoplasm. It carries out the reaction GMP + ATP = GDP + ADP. Its function is as follows. Essential for recycling GMP and indirectly, cGMP. The chain is Guanylate kinase from Acinetobacter baylyi (strain ATCC 33305 / BD413 / ADP1).